A 264-amino-acid polypeptide reads, in one-letter code: Meiotic recombination protein REC102 (264 aa).

Belongs to the TOP6B-like family. In terms of assembly, interacts with REC104; seems to form a functional unit with REC104. REC102-REC104 interacts with SKI8-SPO11 and this interaction is required for proper subcellular location of the proteins during the initiation of recombination. Interacts with MEI4, REC114 and SPO11.

Its subcellular location is the nucleus. Its function is as follows. Required for formation of the SPO11-mediated double-strand breaks (DSBs) that initiate meiotic recombination. May mediate the interaction between SPO11 subunits during meiosis. Also needed for homolog chromosome pairing, synaptonemal complex formation, and for the proper timing of the first meiotic division. Not required for mitosis and mitotic DNA repair mechanisms. The sequence is that of Meiotic recombination protein REC102 from Saccharomyces cerevisiae (strain ATCC 204508 / S288c) (Baker's yeast).